The chain runs to 436 residues: MNNIVAIVGRPNVGKSTLFNRLIQRREAIVDSVSGVTRDRNYGKSEWNGKEFSVIDTGGYIRGSDDIFEGEIRKQVELAIDESDVIIFVVDVEEGITPMDDAVAKMLRKVTKPVLLAVNKVDNAMREKDAVEFYNLGLGEYYTFASISGSGTGDLLDALIDAFPIKPLPTQEEIVLPRFAVVGRPNAGKSSFINALIGKERFMVTDIAGTTRDSIDTKYDRFGFEFNLVDTAGIRRKAKVKEDLEFYSVMRSVRAIEHADVCILIIDATRGFEGQDQSIFWLAEKNRKGVVILVNKWDLVEKDTMSTRDYEAKIREELMPFVDVPILFVSALTKQRLLKALEATVQVYENRQQRISTSKFNEYMLKIIENHPPPALKGKFVKIKYCMQLPTPTPQFVFFANLPQYVKDAYKRFLENKIRENWDFEGVPIDIYIREK.

EngA-type G domains follow at residues 3–167 (NIVA…PIKP) and 177–352 (PRFA…ENRQ). Residues 9-16 (GRPNVGKS), 56-60 (DTGGY), 119-122 (NKVD), 183-190 (GRPNAGKS), 230-234 (DTAGI), and 295-298 (NKWD) contribute to the GTP site. The region spanning 353 to 436 (QRISTSKFNE…VPIDIYIREK (84 aa)) is the KH-like domain.

The protein belongs to the TRAFAC class TrmE-Era-EngA-EngB-Septin-like GTPase superfamily. EngA (Der) GTPase family. Associates with the 50S ribosomal subunit.

In terms of biological role, GTPase that plays an essential role in the late steps of ribosome biogenesis. This chain is GTPase Der, found in Flavobacterium psychrophilum (strain ATCC 49511 / DSM 21280 / CIP 103535 / JIP02/86).